The chain runs to 510 residues: Probable lipid II flippase MurJ (510 aa).

The next 12 membrane-spanning stretches (helical) occupy residues 13–33, 81–101, 130–150, 154–174, 182–202, 240–260, 266–286, 315–335, 357–377, 396–416, 443–463, and 481–501; these read DVVI…LFAN, GLVS…AALF, FPYL…NTIG, VMSF…LFLA, LALA…QIPF, INLL…ISWL, LLEF…LPTL, IFLL…PMLL, AFNA…GYYA, MGFN…ASAM, VFFV…WYYV, and LVWL…LLGV.

The protein belongs to the MurJ/MviN family.

The protein localises to the cell inner membrane. Its pathway is cell wall biogenesis; peptidoglycan biosynthesis. Its function is as follows. Involved in peptidoglycan biosynthesis. Transports lipid-linked peptidoglycan precursors from the inner to the outer leaflet of the cytoplasmic membrane. The chain is Probable lipid II flippase MurJ from Haemophilus influenzae (strain ATCC 51907 / DSM 11121 / KW20 / Rd).